A 348-amino-acid polypeptide reads, in one-letter code: Centromere protein L (348 aa).

Belongs to the CENP-L/IML3 family.

Its subcellular location is the nucleus. The protein resides in the chromosome. The protein localises to the centromere. In terms of biological role, probable component of a centromeric complex involved in assembly of kinetochore proteins, mitotic progression and chromosome segregation. The protein is Centromere protein L (cenpl) of Xenopus tropicalis (Western clawed frog).